A 296-amino-acid polypeptide reads, in one-letter code: (+)-neomenthol dehydrogenase (296 aa).

Position 16 to 40 (16 to 40 (RGIGFEICRQLASEGIRVVLTSRDE)) interacts with NADP(+). Residue serine 164 participates in substrate binding. Tyrosine 220 functions as the Proton acceptor in the catalytic mechanism.

It belongs to the short-chain dehydrogenases/reductases (SDR) family. In terms of assembly, monomer.

The protein localises to the cytoplasm. The catalysed reaction is (+)-neomenthol + NADP(+) = (1R,4S)-menthone + NADPH + H(+). In terms of biological role, aldehyde reductase that catalyzes the reduction of the aldehyde carbonyl groups on saturated and alpha,beta-unsaturated aldehydes with more than 5 carbons. Involved in basal resistance against pathogens. The chain is (+)-neomenthol dehydrogenase (SDR1) from Arabidopsis thaliana (Mouse-ear cress).